A 115-amino-acid polypeptide reads, in one-letter code: Evasin P1183 (115 aa).

An N-terminal signal peptide occupies residues 1 to 25 (MTRNWSFRVIFVSAMWCALLKFATL). Cystine bridges form between Cys38/Cys58, Cys54/Cys94, Cys70/Cys99, and Cys89/Cys108. N-linked (GlcNAc...) asparagine glycosylation is found at Asn45, Asn72, and Asn103.

Its subcellular location is the secreted. Salivary chemokine-binding protein which binds to host chemokine CCL2. The polypeptide is Evasin P1183 (Amblyomma triste (Neotropical tick)).